Here is a 233-residue protein sequence, read N- to C-terminus: Pyridoxal phosphate homeostasis protein (233 aa).

At Lys35 the chain carries N6-(pyridoxal phosphate)lysine.

Belongs to the pyridoxal phosphate-binding protein YggS/PROSC family.

Functionally, pyridoxal 5'-phosphate (PLP)-binding protein, which is involved in PLP homeostasis. This is Pyridoxal phosphate homeostasis protein from Pasteurella multocida (strain Pm70).